A 168-amino-acid chain; its full sequence is Probable deoxyuridine 5'-triphosphate nucleotidohydrolase (168 aa).

It belongs to the dCTP deaminase family. Archaeal dUTPase subfamily.

The enzyme catalyses dUTP + H2O = dUMP + diphosphate + H(+). It participates in pyrimidine metabolism; dUMP biosynthesis; dUMP from dCTP (dUTP route): step 2/2. This enzyme is involved in nucleotide metabolism: it produces dUMP, the immediate precursor of thymidine nucleotides and it decreases the intracellular concentration of dUTP so that uracil cannot be incorporated into DNA. The protein is Probable deoxyuridine 5'-triphosphate nucleotidohydrolase of Archaeoglobus fulgidus (strain ATCC 49558 / DSM 4304 / JCM 9628 / NBRC 100126 / VC-16).